The following is a 171-amino-acid chain: MRYVTYIVLLILVVIFFSPLNFFNTNSEIINYLIRTFYHANLQHLLANSFSFYMLSFLEDVMGHAKFAFCIIFIWILSSMLLLAEHTAFPSRKVYTVGFSGVIFGLIVVYLMSLGKNRGLSIAGLVLSIIPQFFVSGISYEGHICGMIAGFVYVVLFPLPKGSVDNQVAMF.

The next 4 helical transmembrane spans lie at 3-23, 67-87, 94-114, and 119-139; these read YVTY…LNFF, FAFC…AEHT, VYTV…LMSL, and GLSI…SGIS. The Nucleophile role is filled by Ser-100. Residue His-143 is part of the active site. Residues 144-164 traverse the membrane as a helical segment; that stretch reads ICGMIAGFVYVVLFPLPKGSV.

The protein belongs to the peptidase S54 family.

The protein localises to the membrane. Functionally, probable serine protease. This is Putative rhomboid protein L523 from Acanthamoeba polyphaga mimivirus (APMV).